A 230-amino-acid polypeptide reads, in one-letter code: 7-cyano-7-deazaguanine synthase (230 aa).

An ATP-binding site is contributed by 8–18 (FSGGQDSTTCL). Zn(2+) is bound by residues cysteine 187, cysteine 196, cysteine 199, and cysteine 202.

Belongs to the QueC family. It depends on Zn(2+) as a cofactor.

The enzyme catalyses 7-carboxy-7-deazaguanine + NH4(+) + ATP = 7-cyano-7-deazaguanine + ADP + phosphate + H2O + H(+). It functions in the pathway purine metabolism; 7-cyano-7-deazaguanine biosynthesis. In terms of biological role, catalyzes the ATP-dependent conversion of 7-carboxy-7-deazaguanine (CDG) to 7-cyano-7-deazaguanine (preQ(0)). This chain is 7-cyano-7-deazaguanine synthase, found in Shewanella amazonensis (strain ATCC BAA-1098 / SB2B).